The primary structure comprises 260 residues: Putative nudix hydrolase 6 (260 aa).

Positions 113–257 constitute a Nudix hydrolase domain; sequence PNHAADPIVS…SHFIDLLKES (145 aa). The Nudix box motif lies at 148-170; it reads GMVDAGEHVSQTLRREFAEEAMH. Mg(2+) contacts are provided by E163 and E167.

This sequence belongs to the Nudix hydrolase family. It depends on Mg(2+) as a cofactor. The cofactor is Mn(2+).

Its function is as follows. Probably mediates the hydrolysis of some nucleoside diphosphate derivatives. This Caenorhabditis elegans protein is Putative nudix hydrolase 6 (ndx-6).